A 378-amino-acid chain; its full sequence is MNNTEYYDRLGVSKDASQDDIKKAYRKMSKKYHPDINKEAGAEQKYKDVQEAYETLSDSQKRAAYDQYGAAGAQGGFGGGAGGFGGFDGGGFGGFEDIFSSFFGGGGSRNPNAPRQGDDLQYRVNLSFEEAVFGVEKEVSYNREATCGTCLGSGAKPGTAPVTCRKCHGSGVMTIDTQTPLGMMRRQVTCDICHGSGKEIKEPCQTCHGTGHEKQAHKVSVKIPAGVETGQQIRLQGQGEAGFNGGPYGDLFVILNVLPSKQFERNGSTIYYSLDISFTQAALGDTVEIPTVHGDVEMAIPAGTQTGKTFRLKGKGAPKLRGGGQGDQHVTVNIVTPTKLNDAQREALQAFAEASGDKMLHPKKKGFFDKVKDALEDI.

Residues 5–69 (EYYDRLGVSK…QKRAAYDQYG (65 aa)) enclose the J domain. A CR-type zinc finger spans residues 134–216 (GVEKEVSYNR…CHGTGHEKQA (83 aa)). Zn(2+) is bound by residues Cys-147, Cys-150, Cys-164, Cys-167, Cys-190, Cys-193, Cys-204, and Cys-207. CXXCXGXG motif repeat units follow at residues 147–154 (CGTCLGSG), 164–171 (CRKCHGSG), 190–197 (CDICHGSG), and 204–211 (CQTCHGTG).

Belongs to the DnaJ family. In terms of assembly, homodimer. The cofactor is Zn(2+).

The protein resides in the cytoplasm. Its function is as follows. Participates actively in the response to hyperosmotic and heat shock by preventing the aggregation of stress-denatured proteins and by disaggregating proteins, also in an autonomous, DnaK-independent fashion. Unfolded proteins bind initially to DnaJ; upon interaction with the DnaJ-bound protein, DnaK hydrolyzes its bound ATP, resulting in the formation of a stable complex. GrpE releases ADP from DnaK; ATP binding to DnaK triggers the release of the substrate protein, thus completing the reaction cycle. Several rounds of ATP-dependent interactions between DnaJ, DnaK and GrpE are required for fully efficient folding. Also involved, together with DnaK and GrpE, in the DNA replication of plasmids through activation of initiation proteins. The protein is Chaperone protein DnaJ of Streptococcus pyogenes serotype M6 (strain ATCC BAA-946 / MGAS10394).